The chain runs to 425 residues: Histidine--tRNA ligase (425 aa).

This sequence belongs to the class-II aminoacyl-tRNA synthetase family. Homodimer.

It localises to the cytoplasm. The enzyme catalyses tRNA(His) + L-histidine + ATP = L-histidyl-tRNA(His) + AMP + diphosphate + H(+). The protein is Histidine--tRNA ligase of Histophilus somni (strain 129Pt) (Haemophilus somnus).